A 356-amino-acid polypeptide reads, in one-letter code: Heparan sulfate 2-O-sulfotransferase 1 (356 aa).

The Cytoplasmic segment spans residues 1–11; sequence MGLLRIMMPPK. The helical; Signal-anchor for type II membrane protein transmembrane segment at 12 to 28 threads the bilayer; the sequence is LQLLAVVAFAVAMLFLE. Positions 24-51 form a coiled coil; the sequence is MLFLENQIQKLEESRSKLERAIARHEVR. Residues 29 to 356 lie on the Lumenal side of the membrane; the sequence is NQIQKLEESR…FYEKIYPKSN (328 aa). Lys83, Thr84, Ala85, Ser86, Thr87, and Ser88 together coordinate adenosine 3',5'-bisphosphate. N-linked (GlcNAc...) asparagine glycosylation is found at Asn108 and Asn127. Catalysis depends on residues His140 and His142. Arg164 and Ser172 together coordinate adenosine 3',5'-bisphosphate. Intrachain disulfides connect Cys201-Cys209 and Cys222-Cys228. Tyr279, Ser285, Thr290, and Lys293 together coordinate adenosine 3',5'-bisphosphate.

Belongs to the sulfotransferase 3 family. As to quaternary structure, homotrimer. Interacts with the C5-epimerase GLCE. N-glycosylated.

The protein resides in the golgi apparatus membrane. Catalyzes the transfer of a sulfo group from 3'-phospho-5'-adenylyl sulfate (PAPS) to the 2-OH position of iduronic acid (IdoA) or glucuronic acid (GlcA) within the heparan sulfate (HS) chain and participates in HS biosynthesis. Required for metanephric development of kidney formation, suggesting that 2-O-sulfation within HS is essential for signaling between ureteric bud and metanephric mesenchyme. The sequence is that of Heparan sulfate 2-O-sulfotransferase 1 from Pongo abelii (Sumatran orangutan).